Consider the following 367-residue polypeptide: Phosphoribosylaminoimidazole-succinocarboxamide synthase (367 aa).

It belongs to the SAICAR synthetase family.

It carries out the reaction 5-amino-1-(5-phospho-D-ribosyl)imidazole-4-carboxylate + L-aspartate + ATP = (2S)-2-[5-amino-1-(5-phospho-beta-D-ribosyl)imidazole-4-carboxamido]succinate + ADP + phosphate + 2 H(+). It participates in purine metabolism; IMP biosynthesis via de novo pathway; 5-amino-1-(5-phospho-D-ribosyl)imidazole-4-carboxamide from 5-amino-1-(5-phospho-D-ribosyl)imidazole-4-carboxylate: step 1/2. The sequence is that of Phosphoribosylaminoimidazole-succinocarboxamide synthase from Shewanella sp. (strain MR-7).